A 474-amino-acid polypeptide reads, in one-letter code: ATP synthase subunit beta 1 (474 aa).

Residue 157 to 164 coordinates ATP; the sequence is GGAGVGKT.

Belongs to the ATPase alpha/beta chains family. In terms of assembly, F-type ATPases have 2 components, CF(1) - the catalytic core - and CF(0) - the membrane proton channel. CF(1) has five subunits: alpha(3), beta(3), gamma(1), delta(1), epsilon(1). CF(0) has three main subunits: a(1), b(2) and c(9-12). The alpha and beta chains form an alternating ring which encloses part of the gamma chain. CF(1) is attached to CF(0) by a central stalk formed by the gamma and epsilon chains, while a peripheral stalk is formed by the delta and b chains.

It is found in the cell inner membrane. The enzyme catalyses ATP + H2O + 4 H(+)(in) = ADP + phosphate + 5 H(+)(out). Its function is as follows. Produces ATP from ADP in the presence of a proton gradient across the membrane. The catalytic sites are hosted primarily by the beta subunits. The chain is ATP synthase subunit beta 1 from Albidiferax ferrireducens (strain ATCC BAA-621 / DSM 15236 / T118) (Rhodoferax ferrireducens).